Here is a 672-residue protein sequence, read N- to C-terminus: Iron-phytosiderophore transporter YSL15 (672 aa).

Residues 1-11 (MEHADADRTRV) show a composition bias toward basic and acidic residues. The tract at residues 1–27 (MEHADADRTRVAPEIGSLHDEDAEADP) is disordered. Transmembrane regions (helical) follow at residues 47–67 (GVVA…KIAL), 70–90 (GLVP…LRGW), 115–135 (CAVA…LLGL), 158–178 (GIGW…LSLI), 218–238 (LHGF…QWFY), 279–299 (LVNL…WPLI), 325–345 (FLCI…VTGV), 390–410 (MAYS…PIMF), 418–438 (VIIA…GAGL), 450–470 (IALF…AGLV), 504–524 (VGEL…FMLF), 556–576 (ISAL…FAVL), 602–622 (FLVG…LFAW), and 630–650 (AAFM…IWTF).

The protein belongs to the YSL (TC 2.A.67.2) family. In terms of tissue distribution, expressed in root phloem and at low levels in the shoot companion cells.

It is found in the cell membrane. In terms of biological role, involved in Fe(3+) uptake from the rhizosphere and phloem transport of iron. Plays an important role in iron homeostasis during the early stages of growth. Transports Fe(3+)-phytosiderophore, but not Fe(3+)- or Fe(2+)-nicotianamine. May not transport other chelated metals. The protein is Iron-phytosiderophore transporter YSL15 (YSL15) of Oryza sativa subsp. japonica (Rice).